A 620-amino-acid chain; its full sequence is Protein phosphatase 2C-like domain-containing protein 1 (620 aa).

Positions 173 to 611 constitute a PPM-type phosphatase domain; that stretch reads GIAICSNNNS…DSITVMVMFL (439 aa).

It belongs to the PP2C family.

The chain is Protein phosphatase 2C-like domain-containing protein 1 (Pp2d1) from Mus musculus (Mouse).